Reading from the N-terminus, the 450-residue chain is UDP-N-acetylmuramoylalanine--D-glutamate ligase (450 aa).

ATP is bound at residue 118 to 124 (GSNAKST).

This sequence belongs to the MurCDEF family.

The protein resides in the cytoplasm. It catalyses the reaction UDP-N-acetyl-alpha-D-muramoyl-L-alanine + D-glutamate + ATP = UDP-N-acetyl-alpha-D-muramoyl-L-alanyl-D-glutamate + ADP + phosphate + H(+). The protein operates within cell wall biogenesis; peptidoglycan biosynthesis. Cell wall formation. Catalyzes the addition of glutamate to the nucleotide precursor UDP-N-acetylmuramoyl-L-alanine (UMA). The sequence is that of UDP-N-acetylmuramoylalanine--D-glutamate ligase from Pseudomonas putida (strain ATCC 47054 / DSM 6125 / CFBP 8728 / NCIMB 11950 / KT2440).